A 75-amino-acid chain; its full sequence is Putative antitoxin VapB17 (75 aa).

In terms of biological role, putative antitoxin component of a possible type II toxin-antitoxin (TA) system. The cognate toxin is VapC17. The polypeptide is Putative antitoxin VapB17 (vapB17) (Mycobacterium tuberculosis (strain CDC 1551 / Oshkosh)).